We begin with the raw amino-acid sequence, 103 residues long: Entry-fusion complex protein OPG086 (103 aa).

A helical; Signal-anchor membrane pass occupies residues 1–21; the sequence is MTLFLVIFFILFLLLCYFFSF. The Virion surface portion of the chain corresponds to 22–103; the sequence is KRTNKMEIGI…KLVPTLLLSK (82 aa).

Belongs to the orthopoxvirus OPG086 family. As to quaternary structure, interacts with OPG099/L5. Component of the entry fusion complex (EFC) composed of OPG053, OPG076, OPG086, OPG094, OPG095, OPG099, OPG107, OPG143, OPG104, OPG147 and OPG155. Except for OPG095 and OPG053, each of the EFC proteins is required for assembly or stability of the complex. Post-translationally, unglycosylated because produced in viral factories instead of the classic ER -Golgi route.

The protein localises to the virion membrane. Its function is as follows. Component of the entry fusion complex (EFC), which consists of 11 proteins. During cell infection, this complex mediates entry of the virion core into the host cytoplasm by a two-step mechanism consisting of lipid mixing of the viral and cellular membranes and subsequent pore formation. This chain is Entry-fusion complex protein OPG086 (OPG086), found in Vertebrata (FPV).